We begin with the raw amino-acid sequence, 504 residues long: Sodium-coupled neutral amino acid transporter 3 (504 aa).

Phosphoserine; by PKC is present on Ser-52. Residue Asn-73 is glycosylated (N-linked (GlcNAc...) asparagine). 5 consecutive transmembrane segments (helical) span residues 82 to 102 (GILG…LFLL), 105 to 125 (VALL…IVGI), 143 to 163 (AAAL…LYII), 186 to 206 (MDGN…LALM), and 212 to 232 (LGYS…AVIY). The cysteines at positions 239 and 275 are disulfide-linked. N-linked (GlcNAc...) asparagine glycosylation is found at Asn-247 and Asn-251. The chain crosses the membrane as a helical span at residues 287 to 307 (AYTIPIMAFAFVCHPEVLPIY). Asn-323 carries N-linked (GlcNAc...) asparagine glycosylation. A run of 5 helical transmembrane segments spans residues 324-344 (LSIA…YLTF), 366-386 (ILCV…IVLF), 408-428 (VLIA…APNI), 431-451 (IFGI…PAIF), and 469-489 (ILAL…LSFI).

Belongs to the amino acid/polyamine transporter 2 family. Post-translationally, phosphorylation at Ser-52 induces internalization and sequestration into an intracellular reservoir. During dephosphorylation by protein phosphatases, can recycle back to the plasma membrane and regain activity. Prolonged phosphorylation results in its degradation. As to expression, highly expressed in liver. Expressed in skeletal muscle. Expressed in kidney, heart and brain. Not detected in gut, lung or spleen. Expressed ubiquitously in hepatocytes in liver whereas in kidney expression is restricted to the medulla. Within brain, expressed in glial cells. In the cerebellum, expressed on Bergmann glial fibers in the molecular layer and astrocytes in the granule layer. Expressed in brain kidney and liver (at protein level). In the adult kidney, highly expressed in the outer strip of the outer medulla and medullary rays penetrating into the kidney cortex (at protein level).

The protein resides in the cell membrane. It localises to the basolateral cell membrane. The enzyme catalyses L-glutamine(out) + Na(+)(out) + H(+)(in) = L-glutamine(in) + Na(+)(in) + H(+)(out). It carries out the reaction L-asparagine(out) + Na(+)(out) + H(+)(in) = L-asparagine(in) + Na(+)(in) + H(+)(out). The catalysed reaction is L-histidine(out) + Na(+)(out) + H(+)(in) = L-histidine(in) + Na(+)(in) + H(+)(out). L-glutamine efflux and L-glutamine uptake are regulated by CO2/HCO3(-) through SLC4A4 leading to modulation of cytosolic pH and Na(+)concentration. In terms of biological role, symporter that cotransports specific neutral amino acids and sodium ions, coupled to an H(+) antiporter activity. Mainly participates in the glutamate-GABA-glutamine cycle in brain where it transports L-glutamine from astrocytes in the intercellular space for the replenishment of both neurotransmitters glutamate and gamma-aminobutyric acid (GABA) in neurons. Also functions as the major influx transporter in ganglion cells mediating the uptake of glutamine. The transport activity is specific for L-glutamine, L-histidine and L-asparagine. The transport is electroneutral coupled to the cotransport of 1 Na(+) and the antiport of 1 H(+), pH dependent, saturable, Li(+) tolerant and functions in both direction depending on the concentration gradients of its substrates and cotransported ions. Also mediates an amino acid-gated H(+) conductance that is not stoichiometrically coupled to the amino acid transport but which influences the ionic gradients that drive the amino acid transport. In addition, may play a role in nitrogen metabolism, amino acid homeostasis, glucose metabolism and renal ammoniagenesis. In Rattus norvegicus (Rat), this protein is Sodium-coupled neutral amino acid transporter 3.